Here is a 294-residue protein sequence, read N- to C-terminus: 2-dehydropantoate 2-reductase (294 aa).

Residues 10 to 15 (GAGALG), R34, K74, N98, and A122 each bind NADP(+). K178 serves as the catalytic Proton donor. Residues K178, N182, N186, N196, and 243-246 (NRSS) contribute to the substrate site. E258 contacts NADP(+).

Belongs to the ketopantoate reductase family.

Its subcellular location is the cytoplasm. It carries out the reaction (R)-pantoate + NAD(+) = 2-dehydropantoate + NADH + H(+). The enzyme catalyses (R)-pantoate + NADP(+) = 2-dehydropantoate + NADPH + H(+). It functions in the pathway cofactor biosynthesis; coenzyme A biosynthesis. Catalyzes the NAD(P)H-dependent reduction of ketopantoate into pantoic acid. This chain is 2-dehydropantoate 2-reductase, found in Archaeoglobus fulgidus (strain ATCC 49558 / DSM 4304 / JCM 9628 / NBRC 100126 / VC-16).